Here is a 159-residue protein sequence, read N- to C-terminus: Phosphopantetheine adenylyltransferase (159 aa).

Residue Thr10 coordinates substrate. Residues 10-11 (TF) and His18 contribute to the ATP site. The substrate site is built by Lys42, Met74, and Arg88. ATP is bound by residues 89-91 (GLR), Glu99, and 124-130 (WSFISSS).

Belongs to the bacterial CoaD family. As to quaternary structure, homohexamer. Mg(2+) is required as a cofactor.

Its subcellular location is the cytoplasm. The catalysed reaction is (R)-4'-phosphopantetheine + ATP + H(+) = 3'-dephospho-CoA + diphosphate. It functions in the pathway cofactor biosynthesis; coenzyme A biosynthesis; CoA from (R)-pantothenate: step 4/5. Functionally, reversibly transfers an adenylyl group from ATP to 4'-phosphopantetheine, yielding dephospho-CoA (dPCoA) and pyrophosphate. This Escherichia coli O7:K1 (strain IAI39 / ExPEC) protein is Phosphopantetheine adenylyltransferase.